A 101-amino-acid polypeptide reads, in one-letter code: Guanyl-specific ribonuclease Po1 (101 aa).

A Pyrrolidone carboxylic acid modification is found at glutamine 1. Disulfide bonds link cysteine 7–cysteine 84, cysteine 9–cysteine 99, and cysteine 48–cysteine 82. The active site involves histidine 36. Glutamate 54 (proton acceptor) is an active-site residue. Histidine 87 acts as the Proton donor in catalysis.

This sequence belongs to the ribonuclease N1/T1 family.

The catalysed reaction is [RNA] containing guanosine + H2O = an [RNA fragment]-3'-guanosine-3'-phosphate + a 5'-hydroxy-ribonucleotide-3'-[RNA fragment].. Its activity is regulated as follows. Inhibited by divalent cations. Inhibition decreases in the order zinc, lead, cadmium, nickel, mercury. The chain is Guanyl-specific ribonuclease Po1 from Pleurotus ostreatus (Oyster mushroom).